Reading from the N-terminus, the 92-residue chain is DNA-directed RNA polymerase subunit Rpo11 (92 aa).

The protein belongs to the archaeal Rpo11/eukaryotic RPB11/RPC19 RNA polymerase subunit family. As to quaternary structure, part of the 13-subunit RNA polymerase complex.

Its subcellular location is the cytoplasm. It catalyses the reaction RNA(n) + a ribonucleoside 5'-triphosphate = RNA(n+1) + diphosphate. Functionally, DNA-dependent RNA polymerase (RNAP) catalyzes the transcription of DNA into RNA using the four ribonucleoside triphosphates as substrates. The chain is DNA-directed RNA polymerase subunit Rpo11 from Saccharolobus shibatae (strain ATCC 51178 / DSM 5389 / JCM 8931 / NBRC 15437 / B12) (Sulfolobus shibatae).